Reading from the N-terminus, the 263-residue chain is Endonuclease 8 (263 aa).

Proline 2 (schiff-base intermediate with DNA) is an active-site residue. Glutamate 3 functions as the Proton donor in the catalytic mechanism. Lysine 53 serves as the catalytic Proton donor; for beta-elimination activity. DNA contacts are provided by glutamine 70, arginine 125, and asparagine 169. An FPG-type zinc finger spans residues 229 to 263 (KVFHRDGEACERCGGIIEKTTLSSRPFYWCPHCQK). Arginine 253 acts as the Proton donor; for delta-elimination activity in catalysis.

It belongs to the FPG family. Zn(2+) serves as cofactor.

It catalyses the reaction 2'-deoxyribonucleotide-(2'-deoxyribose 5'-phosphate)-2'-deoxyribonucleotide-DNA = a 3'-end 2'-deoxyribonucleotide-(2,3-dehydro-2,3-deoxyribose 5'-phosphate)-DNA + a 5'-end 5'-phospho-2'-deoxyribonucleoside-DNA + H(+). Functionally, involved in base excision repair of DNA damaged by oxidation or by mutagenic agents. Acts as a DNA glycosylase that recognizes and removes damaged bases. Has a preference for oxidized pyrimidines, such as thymine glycol, 5,6-dihydrouracil and 5,6-dihydrothymine. Has AP (apurinic/apyrimidinic) lyase activity and introduces nicks in the DNA strand. Cleaves the DNA backbone by beta-delta elimination to generate a single-strand break at the site of the removed base with both 3'- and 5'-phosphates. In Salmonella agona (strain SL483), this protein is Endonuclease 8.